The following is a 227-amino-acid chain: UPF0173 metal-dependent hydrolase Cmaq_1073 (227 aa).

It belongs to the UPF0173 family.

This chain is UPF0173 metal-dependent hydrolase Cmaq_1073, found in Caldivirga maquilingensis (strain ATCC 700844 / DSM 13496 / JCM 10307 / IC-167).